We begin with the raw amino-acid sequence, 360 residues long: MTATLQQRKSANVWEQFCEWITSTNNRLYIGWFGVLMIPTLLAATTCFIIAFIAAPPVDIDGIREPVAGSLIYGNNIISGAVVPSSNAIGLHFYPIWEAASLDEWLYNGGPYQLVIFHFLTGVFCYLGREWELSYRLGMRPWICLAFSAPVAAATAVFLIYPIGQGSFSDGMPLGISGTFNFMIVFQAEHNILMHPFHMLGVAGVFGGSLFSAMHGSLVTSSLVRETTENESQNYGYKFGQEEETYNIVAAHGYFGRLIFQYASFNNSRQLHFFLAAWPVIGIWFTALGVSTMAFNLNGFNFNQSIIDSQGRVINTWADIINRANLGMEVMHERNAHNFPLDLAAGEVAPVAISAPAING.

The next 3 membrane-spanning stretches (helical) occupy residues 29-46 (YIGWFGVLMIPTLLAATT), 118-133 (HFLTGVFCYLGREWEL), and 142-156 (WICLAFSAPVAAATA). His118 contributes to the chlorophyll a binding site. A pheophytin a-binding site is contributed by Tyr126. The [CaMn4O5] cluster site is built by Asp170 and Glu189. A helical transmembrane segment spans residues 197–218 (FHMLGVAGVFGGSLFSAMHGSL). Chlorophyll a is bound at residue His198. Residues His215 and 264–265 (SF) each bind a quinone. His215 is a binding site for Fe cation. His272 lines the Fe cation pocket. A helical transmembrane segment spans residues 274 to 288 (FLAAWPVIGIWFTAL). Positions 332, 333, 342, and 344 each coordinate [CaMn4O5] cluster. Positions 345–360 (AGEVAPVAISAPAING) are excised as a propeptide.

Belongs to the reaction center PufL/M/PsbA/D family. In terms of assembly, PSII is composed of 1 copy each of membrane proteins PsbA, PsbB, PsbC, PsbD, PsbE, PsbF, PsbH, PsbI, PsbJ, PsbK, PsbL, PsbM, PsbT, PsbX, PsbY, PsbZ, Psb30/Ycf12, peripheral proteins PsbO, CyanoQ (PsbQ), PsbU, PsbV and a large number of cofactors. It forms dimeric complexes. Requires The D1/D2 heterodimer binds P680, chlorophylls that are the primary electron donor of PSII, and subsequent electron acceptors. It shares a non-heme iron and each subunit binds pheophytin, quinone, additional chlorophylls, carotenoids and lipids. D1 provides most of the ligands for the Mn4-Ca-O5 cluster of the oxygen-evolving complex (OEC). There is also a Cl(-1) ion associated with D1 and D2, which is required for oxygen evolution. The PSII complex binds additional chlorophylls, carotenoids and specific lipids. as cofactor. In terms of processing, tyr-161 forms a radical intermediate that is referred to as redox-active TyrZ, YZ or Y-Z. C-terminally processed by CtpA; processing is essential to allow assembly of the oxygen-evolving complex and thus photosynthetic growth.

It is found in the cellular thylakoid membrane. The enzyme catalyses 2 a plastoquinone + 4 hnu + 2 H2O = 2 a plastoquinol + O2. Photosystem II (PSII) is a light-driven water:plastoquinone oxidoreductase that uses light energy to abstract electrons from H(2)O, generating O(2) and a proton gradient subsequently used for ATP formation. It consists of a core antenna complex that captures photons, and an electron transfer chain that converts photonic excitation into a charge separation. The D1/D2 (PsbA/PsbD) reaction center heterodimer binds P680, the primary electron donor of PSII as well as several subsequent electron acceptors. This Nostoc sp. (strain PCC 7120 / SAG 25.82 / UTEX 2576) protein is Photosystem II protein D1 2.